Consider the following 265-residue polypeptide: Chanoclavine-I dehydrogenase easD (265 aa).

A signal peptide spans 1–20 (MSFVSSKIFAITGGASGIGA). Residues Ile-18, Asp-66, Arg-132, Tyr-169, Lys-173, and Thr-205 each coordinate NADP(+). Residue Tyr-169 is the Proton donor of the active site. The Lowers pKa of active site Tyr role is filled by Lys-173.

The protein belongs to the short-chain dehydrogenases/reductases (SDR) family. Homotetramer.

It carries out the reaction chanoclavine-I + NAD(+) = chanoclavine-I aldehyde + NADH + H(+). It participates in alkaloid biosynthesis; ergot alkaloid biosynthesis. Functionally, chanoclavine-I dehydrogenase; part of the gene cluster that mediates the biosynthesis of fungal ergot alkaloid. DmaW catalyzes the first step of ergot alkaloid biosynthesis by condensing dimethylallyl diphosphate (DMAP) and tryptophan to form 4-dimethylallyl-L-tryptophan. The second step is catalyzed by the methyltransferase easF that methylates 4-dimethylallyl-L-tryptophan in the presence of S-adenosyl-L-methionine, resulting in the formation of 4-dimethylallyl-L-abrine. The catalase easC and the FAD-dependent oxidoreductase easE then transform 4-dimethylallyl-L-abrine to chanoclavine-I which is further oxidized by easD in the presence of NAD(+), resulting in the formation of chanoclavine-I aldehyde. Chanoclavine-I aldehyde is the precursor of ergoamides and ergopeptines in Clavicipitaceae, and clavine-type alcaloids such as fumiclavine in Trichocomaceae. However, the metabolites downstream of chanoclavine-I aldehyde in Arthrodermataceae have not been identified yet. In Trichophyton verrucosum (strain HKI 0517), this protein is Chanoclavine-I dehydrogenase easD.